Reading from the N-terminus, the 251-residue chain is Gamma-interferon-inducible lysosomal thiol reductase (251 aa).

Positions 1-21 are cleaved as a signal peptide; it reads MFGFRLSVLLFAVCSLSACSC. The 39-residue stretch at 22–60 folds into the Saposin A-type domain; that stretch reads MFVNSCKYPPSQWCDSRDIAAQCGVLEQCMKFNASPVTV. Cysteines 68 and 71 form a disulfide. An N-linked (GlcNAc...) asparagine glycan is attached at N108.

The protein belongs to the GILT family. In terms of assembly, dimer; disulfide-linked. As to expression, highly expressed in spleen and kidney. Also detected at lower levels in liver, heart, brain, intestine and gill.

The protein localises to the secreted. Its subcellular location is the lysosome. In terms of biological role, lysosomal thiol reductase that can reduce protein disulfide bonds. May facilitate the complete unfolding of proteins destined for lysosomal degradation. Plays an important role in antigen processing. The sequence is that of Gamma-interferon-inducible lysosomal thiol reductase from Carassius auratus (Goldfish).